The chain runs to 483 residues: Myosin-binding protein H (483 aa).

The segment covering methionine 1 to glutamate 15 has biased composition (polar residues). Residues methionine 1–serine 78 are disordered. Residues threonine 2, threonine 6, and threonine 26 each carry the phosphothreonine modification. A compositionally biased stretch (low complexity) spans glutamine 41–alanine 66. One can recognise a Fibronectin type-III 1 domain in the interval alanine 79–isoleucine 174. One can recognise an Ig-like C2-type 1 domain in the interval proline 178–aspartate 266. The region spanning proline 275–alanine 370 is the Fibronectin type-III 2 domain. The Ig-like C2-type 2 domain maps to proline 388–aspartate 472.

This sequence belongs to the immunoglobulin superfamily. MyBP family. In terms of tissue distribution, skeletal muscle. Expressed at low levels in heart ventricles.

In terms of biological role, binds to myosin; probably involved in interaction with thick myofilaments in the A-band. The chain is Myosin-binding protein H (Mybph) from Mus musculus (Mouse).